We begin with the raw amino-acid sequence, 151 residues long: 3-hydroxyacyl-[acyl-carrier-protein] dehydratase FabZ (151 aa).

Histidine 54 is an active-site residue.

This sequence belongs to the thioester dehydratase family. FabZ subfamily.

It localises to the cytoplasm. It catalyses the reaction a (3R)-hydroxyacyl-[ACP] = a (2E)-enoyl-[ACP] + H2O. In terms of biological role, involved in unsaturated fatty acids biosynthesis. Catalyzes the dehydration of short chain beta-hydroxyacyl-ACPs and long chain saturated and unsaturated beta-hydroxyacyl-ACPs. This is 3-hydroxyacyl-[acyl-carrier-protein] dehydratase FabZ from Pectobacterium atrosepticum (strain SCRI 1043 / ATCC BAA-672) (Erwinia carotovora subsp. atroseptica).